Consider the following 220-residue polypeptide: Protein-L-isoaspartate O-methyltransferase (220 aa).

Serine 64 is an active-site residue.

Belongs to the methyltransferase superfamily. L-isoaspartyl/D-aspartyl protein methyltransferase family.

It localises to the cytoplasm. The enzyme catalyses [protein]-L-isoaspartate + S-adenosyl-L-methionine = [protein]-L-isoaspartate alpha-methyl ester + S-adenosyl-L-homocysteine. In terms of biological role, catalyzes the methyl esterification of L-isoaspartyl residues in peptides and proteins that result from spontaneous decomposition of normal L-aspartyl and L-asparaginyl residues. It plays a role in the repair and/or degradation of damaged proteins. The polypeptide is Protein-L-isoaspartate O-methyltransferase (Thermococcus onnurineus (strain NA1)).